Here is a 138-residue protein sequence, read N- to C-terminus: Phosphoribosyl-AMP cyclohydrolase (138 aa).

Asp-84 lines the Mg(2+) pocket. A Zn(2+)-binding site is contributed by Cys-85. Mg(2+)-binding residues include Asp-86 and Asp-88. Residues Cys-102 and Cys-109 each contribute to the Zn(2+) site.

The protein belongs to the PRA-CH family. Homodimer. It depends on Mg(2+) as a cofactor. The cofactor is Zn(2+).

Its subcellular location is the cytoplasm. The catalysed reaction is 1-(5-phospho-beta-D-ribosyl)-5'-AMP + H2O = 1-(5-phospho-beta-D-ribosyl)-5-[(5-phospho-beta-D-ribosylamino)methylideneamino]imidazole-4-carboxamide. It participates in amino-acid biosynthesis; L-histidine biosynthesis; L-histidine from 5-phospho-alpha-D-ribose 1-diphosphate: step 3/9. Functionally, catalyzes the hydrolysis of the adenine ring of phosphoribosyl-AMP. The polypeptide is Phosphoribosyl-AMP cyclohydrolase (Burkholderia pseudomallei (strain K96243)).